The following is a 490-amino-acid chain: GTPase Der (490 aa).

2 consecutive EngA-type G domains span residues 3-166 (PVVA…AEAM) and 200-373 (IKLA…DSAT). GTP is bound by residues 9–16 (GRPNVGKS), 56–60 (DTGGI), 118–121 (NKVD), 206–213 (GKPNVGKS), 253–257 (DTAGV), and 318–321 (NKWD). One can recognise a KH-like domain in the interval 374 to 458 (RRVSTSMLTR…PIQIRFQDGG (85 aa)).

The protein belongs to the TRAFAC class TrmE-Era-EngA-EngB-Septin-like GTPase superfamily. EngA (Der) GTPase family. As to quaternary structure, associates with the 50S ribosomal subunit.

GTPase that plays an essential role in the late steps of ribosome biogenesis. The chain is GTPase Der from Shewanella piezotolerans (strain WP3 / JCM 13877).